A 341-amino-acid polypeptide reads, in one-letter code: Zinc transporter ZIP11 (341 aa).

7 helical membrane passes run 12–32 (LLGT…VFVF), 44–64 (LGFA…APAV), 72–92 (GFGS…AAFV), 193–213 (IALL…AVGV), 262–284 (FWYG…FAVV), 289–306 (ILPY…YVIM), and 321–341 (LASW…VGLG).

It belongs to the ZIP transporter (TC 2.A.5) family.

It is found in the cell membrane. The protein resides in the nucleus. The protein localises to the cytoplasm. It localises to the golgi apparatus. It catalyses the reaction Zn(2+)(in) = Zn(2+)(out). The enzyme catalyses Cu(2+)(in) = Cu(2+)(out). In terms of biological role, zinc importer that regulates cytosolic zinc concentrations either via zinc influx from the extracellular compartment or efflux from intracellular organelles such as Golgi apparatus. May transport copper ions as well. The transport mechanism remains to be elucidated. This is Zinc transporter ZIP11 (SLC39A11) from Bos taurus (Bovine).